Here is a 66-residue protein sequence, read N- to C-terminus: DNA gyrase inhibitor YacG (66 aa).

Residues C9, C12, C28, and C32 each coordinate Zn(2+). Positions 45-66 (HKIAGAEESEDELYSGDLEPRH) are disordered.

Belongs to the DNA gyrase inhibitor YacG family. In terms of assembly, interacts with GyrB. It depends on Zn(2+) as a cofactor.

In terms of biological role, inhibits all the catalytic activities of DNA gyrase by preventing its interaction with DNA. Acts by binding directly to the C-terminal domain of GyrB, which probably disrupts DNA binding by the gyrase. The sequence is that of DNA gyrase inhibitor YacG from Pseudomonas entomophila (strain L48).